The following is a 451-amino-acid chain: Chromosomal replication initiator protein DnaA (451 aa).

Positions M1 to A82 are domain I, interacts with DnaA modulators. The domain II stretch occupies residues A82–S114. A disordered region spans residues A85–A112. The tract at residues N115–A331 is domain III, AAA+ region. Residues G159, G161, K162, and T163 each contribute to the ATP site. Residues Q332 to T451 form a domain IV, binds dsDNA region.

The protein belongs to the DnaA family. Oligomerizes as a right-handed, spiral filament on DNA at oriC.

It is found in the cytoplasm. In terms of biological role, plays an essential role in the initiation and regulation of chromosomal replication. ATP-DnaA binds to the origin of replication (oriC) to initiate formation of the DNA replication initiation complex once per cell cycle. Binds the DnaA box (a 9 base pair repeat at the origin) and separates the double-stranded (ds)DNA. Forms a right-handed helical filament on oriC DNA; dsDNA binds to the exterior of the filament while single-stranded (ss)DNA is stabiized in the filament's interior. The ATP-DnaA-oriC complex binds and stabilizes one strand of the AT-rich DNA unwinding element (DUE), permitting loading of DNA polymerase. After initiation quickly degrades to an ADP-DnaA complex that is not apt for DNA replication. Binds acidic phospholipids. This chain is Chromosomal replication initiator protein DnaA, found in Alkalilimnicola ehrlichii (strain ATCC BAA-1101 / DSM 17681 / MLHE-1).